We begin with the raw amino-acid sequence, 773 residues long: Lon protease homolog 2, peroxisomal (773 aa).

One can recognise a Lon N-terminal domain in the interval 9-198 (LPVILVTSGV…MCIKWMNEKK (190 aa)). ATP is bound at residue 336–343 (GPPGIGKT). The region spanning 587 to 766 (PLPAGVCFGL…EDVIGAMMDK (180 aa)) is the Lon proteolytic domain. Residues serine 672 and lysine 715 contribute to the active site. The short motif at 771 to 773 (AKL) is the Microbody targeting signal element.

Belongs to the peptidase S16 family.

Its subcellular location is the peroxisome matrix. It carries out the reaction Hydrolysis of proteins in presence of ATP.. Its function is as follows. ATP-dependent serine protease that mediates the selective degradation of misfolded and unassembled polypeptides in the peroxisomal matrix. Necessary for type 2 peroxisome targeting signal (PTS2)-containing protein processing and facilitates peroxisome matrix protein import. The sequence is that of Lon protease homolog 2, peroxisomal from Caenorhabditis elegans.